Here is a 147-residue protein sequence, read N- to C-terminus: MSLSAAEADLAGKSWAPVFANKDANGDAFLVALFEKFPDSANFFADFKGKSVADIKASPKLRDVSSRIFTRLNEFVNNAADAGKMSAMLSQFAKEHVGFGVGSAQFENVRSMFPGFVASVAAPPAGADAAWTKLFGLIIDALKAAGK.

An N-acetylserine modification is found at Ser2. In terms of domain architecture, Globin spans 2–147 (SLSAAEADLA…IIDALKAAGK (146 aa)). A heme b-binding site is contributed by His96.

Belongs to the globin family. In terms of assembly, monomer.

The sequence is that of Globin from Aplysia limacina (Sea hare).